The sequence spans 136 residues: Galectin-7 (136 aa).

One can recognise a Galectin domain in the interval 6-136; it reads HKTSLPQGVR…DVQLHSLNIF (131 aa). 70-76 serves as a coordination point for a beta-D-galactoside; the sequence is WGREERG.

Monomer.

Its subcellular location is the cytoplasm. It localises to the nucleus. The protein localises to the secreted. Its function is as follows. Could be involved in cell-cell and/or cell-matrix interactions necessary for normal growth control. Pro-apoptotic protein that functions intracellularly upstream of JNK activation and cytochrome c release. The chain is Galectin-7 (Lgals7) from Mus musculus (Mouse).